Reading from the N-terminus, the 82-residue chain is UPF0154 protein SPD_1662 (82 aa).

The helical transmembrane segment at 5–25 threads the bilayer; it reads LAIVLIVLAFLGGALGGMYLV.

Belongs to the UPF0154 family.

It localises to the cell membrane. The polypeptide is UPF0154 protein SPD_1662 (Streptococcus pneumoniae serotype 2 (strain D39 / NCTC 7466)).